Reading from the N-terminus, the 516-residue chain is Beta-glucosidase 1 (516 aa).

The first 21 residues, 1–21 (MGHRLVVVLLLALLVAGAARA), serve as a signal peptide directing secretion. Residue Gln68 coordinates a beta-D-glucoside. Asn96 is a glycosylation site (N-linked (GlcNAc...) asparagine). A beta-D-glucoside is bound by residues His169 and 214 to 215 (NE). The active-site Proton donor is the Glu215. A disulfide bridge connects residues Cys234 and Cys237. Asn290 is a glycosylation site (N-linked (GlcNAc...) asparagine). Residue Tyr353 participates in a beta-D-glucoside binding. An N-linked (GlcNAc...) asparagine glycan is attached at Asn364. Glu424 lines the a beta-D-glucoside pocket. Glu424 serves as the catalytic Nucleophile. N-linked (GlcNAc...) asparagine glycosylation occurs at Asn432. A beta-D-glucoside is bound by residues Trp471, 478 to 479 (EW), and Phe487.

It belongs to the glycosyl hydrolase 1 family.

The catalysed reaction is Hydrolysis of terminal, non-reducing beta-D-glucosyl residues with release of beta-D-glucose.. The chain is Beta-glucosidase 1 (BGLU1) from Oryza sativa subsp. japonica (Rice).